The chain runs to 290 residues: Cilia- and flagella-associated protein 298 (290 aa).

Position 264 is a phosphotyrosine (tyrosine 264).

The protein belongs to the CFAP298 family. As to quaternary structure, interacts with ZMYND10.

It is found in the cytoplasm. The protein localises to the cytoskeleton. The protein resides in the cilium basal body. Functionally, plays a role in motile cilium function, possibly by acting on outer dynein arm assembly. Seems to be important for initiation rather than maintenance of cilium motility. Required for correct positioning of the cilium at the apical cell surface, suggesting an additional role in the planar cell polarity (PCP) pathway. May suppress canonical Wnt signaling activity. This is Cilia- and flagella-associated protein 298 from Homo sapiens (Human).